Here is a 655-residue protein sequence, read N- to C-terminus: MGIFSIANQHIRFAVKLACAIVLALFIGFHFQLETPRWAVLTAAIVAAGPAFAAGGEPYSGAIRYRGMLRIIGTFIGCIAALIIIISMIRAPLLMILVCCVWAGFCTWISSLVRIENSYAWGLSGYTALIIVITIQTEPLLTPQFALERCSEIVIGIGCAILADLLFSPRSIKQEVDRELDCLLVAQYQLMQLCIKHGDSEEVDNAWGDLVRRTAALEGMRSNLNMESSRWVRANRRLKALNTLSLTLITQSCETYLIQNTRPELITDTFRELFETPVETVQDVHRQLKRMRRVIVWTGERETPVTLYSWVGAATRYLLLKRGVISNTKISATEEEILQGEPVVKVESAERHHAMVNFWRTTLSCILGTLFWLWTGWTSGNGAMVMIAVVTSLAMRLPNPRMVCIDFIYGTLAALPLGLLYFLVIIPNTQQSMLLLCLSLAVLGFFIGIEVQKRRLGSMGALASTINIIVLDNPMTFHFIQFLDSALGQIVGCMLAFIVILLVRDKSKDRTGRVLLNQFVSAAVSAMTTNVVRRKENRLPALYQQLFLLMNKFPGDLPKFRLALTMIIAHQRLRDAPIPVNEDLSVFHRQLRRTADHVISAGSDDKRRRYFGQLLDELDIYQEKLRIWEAPPQVTEPVKRLTGMLHKYQNALTDS.

The Periplasmic segment spans residues 1 to 12 (MGIFSIANQHIR). The helical transmembrane segment at 13–33 (FAVKLACAIVLALFIGFHFQL) threads the bilayer. The Cytoplasmic portion of the chain corresponds to 34-37 (ETPR). Residues 38 to 58 (WAVLTAAIVAAGPAFAAGGEP) traverse the membrane as a helical segment. Topologically, residues 59 to 68 (YSGAIRYRGM) are periplasmic. The helical transmembrane segment at 69 to 89 (LRIIGTFIGCIAALIIIISMI) threads the bilayer. Residues 90–92 (RAP) are Cytoplasmic-facing. The helical transmembrane segment at 93-113 (LLMILVCCVWAGFCTWISSLV) threads the bilayer. At 114–120 (RIENSYA) the chain is on the periplasmic side. A helical membrane pass occupies residues 121–141 (WGLSGYTALIIVITIQTEPLL). The Cytoplasmic portion of the chain corresponds to 142-151 (TPQFALERCS). A helical transmembrane segment spans residues 152–172 (EIVIGIGCAILADLLFSPRSI). The Periplasmic portion of the chain corresponds to 173–369 (KQEVDRELDC…RTTLSCILGT (197 aa)). Residues 370–390 (LFWLWTGWTSGNGAMVMIAVV) traverse the membrane as a helical segment. The Cytoplasmic segment spans residues 391 to 406 (TSLAMRLPNPRMVCID). The chain crosses the membrane as a helical span at residues 407 to 427 (FIYGTLAALPLGLLYFLVIIP). Topologically, residues 428-430 (NTQ) are periplasmic. The helical transmembrane segment at 431–451 (QSMLLLCLSLAVLGFFIGIEV) threads the bilayer. Over 452 to 459 (QKRRLGSM) the chain is Cytoplasmic. Residues 460–480 (GALASTINIIVLDNPMTFHFI) traverse the membrane as a helical segment. Gln-481 is a topological domain (periplasmic). Residues 482 to 502 (FLDSALGQIVGCMLAFIVILL) form a helical membrane-spanning segment. The Cytoplasmic portion of the chain corresponds to 503 to 655 (VRDKSKDRTG…HKYQNALTDS (153 aa)).

The protein belongs to the aromatic acid exporter ArAE (TC 2.A.85) family.

It is found in the cell inner membrane. Forms an efflux pump with AaeA. Could function as a metabolic relief valve, allowing to eliminate certain compounds when they accumulate to high levels in the cell. This Salmonella typhi protein is p-hydroxybenzoic acid efflux pump subunit AaeB.